Reading from the N-terminus, the 534-residue chain is Phosphoenolpyruvate carboxykinase (ATP) (534 aa).

Substrate-binding residues include Arg58, Tyr194, and Lys200. ATP-binding positions include Lys200, His219, and 235–243 (GLSGTGKTT). Lys200 and His219 together coordinate Mn(2+). Mn(2+) is bound at residue Asp256. Positions 284, 322, and 449 each coordinate ATP. Arg322 lines the substrate pocket.

It belongs to the phosphoenolpyruvate carboxykinase (ATP) family. It depends on Mn(2+) as a cofactor.

It is found in the cytoplasm. The catalysed reaction is oxaloacetate + ATP = phosphoenolpyruvate + ADP + CO2. It participates in carbohydrate biosynthesis; gluconeogenesis. Its function is as follows. Involved in the gluconeogenesis. Catalyzes the conversion of oxaloacetate (OAA) to phosphoenolpyruvate (PEP) through direct phosphoryl transfer between the nucleoside triphosphate and OAA. This is Phosphoenolpyruvate carboxykinase (ATP) from Novosphingobium aromaticivorans (strain ATCC 700278 / DSM 12444 / CCUG 56034 / CIP 105152 / NBRC 16084 / F199).